The sequence spans 465 residues: Adenosylhomocysteinase (465 aa).

Threonine 56, aspartate 131, and glutamate 191 together coordinate substrate. An NAD(+)-binding site is contributed by 192 to 194 (TTT). 2 residues coordinate substrate: lysine 221 and aspartate 225. Residues asparagine 226, 255–260 (GYGDVG), glutamate 278, asparagine 313, 334–336 (IGH), and asparagine 379 contribute to the NAD(+) site.

Belongs to the adenosylhomocysteinase family. Requires NAD(+) as cofactor.

It is found in the cytoplasm. It carries out the reaction S-adenosyl-L-homocysteine + H2O = L-homocysteine + adenosine. The protein operates within amino-acid biosynthesis; L-homocysteine biosynthesis; L-homocysteine from S-adenosyl-L-homocysteine: step 1/1. May play a key role in the regulation of the intracellular concentration of adenosylhomocysteine. The protein is Adenosylhomocysteinase of Chelativorans sp. (strain BNC1).